Reading from the N-terminus, the 413-residue chain is Serine hydroxymethyltransferase (413 aa).

Residues leucine 119 and 123–125 (GHL) each bind (6S)-5,6,7,8-tetrahydrofolate. An N6-(pyridoxal phosphate)lysine modification is found at lysine 228. Glutamate 243 contributes to the (6S)-5,6,7,8-tetrahydrofolate binding site.

It belongs to the SHMT family. In terms of assembly, homodimer. The cofactor is pyridoxal 5'-phosphate.

Its subcellular location is the cytoplasm. It catalyses the reaction (6R)-5,10-methylene-5,6,7,8-tetrahydrofolate + glycine + H2O = (6S)-5,6,7,8-tetrahydrofolate + L-serine. Its pathway is one-carbon metabolism; tetrahydrofolate interconversion. It functions in the pathway amino-acid biosynthesis; glycine biosynthesis; glycine from L-serine: step 1/1. Its function is as follows. Catalyzes the reversible interconversion of serine and glycine with tetrahydrofolate (THF) serving as the one-carbon carrier. This reaction serves as the major source of one-carbon groups required for the biosynthesis of purines, thymidylate, methionine, and other important biomolecules. Also exhibits THF-independent aldolase activity toward beta-hydroxyamino acids, producing glycine and aldehydes, via a retro-aldol mechanism. The polypeptide is Serine hydroxymethyltransferase (Thermoanaerobacter pseudethanolicus (strain ATCC 33223 / 39E) (Clostridium thermohydrosulfuricum)).